Here is a 199-residue protein sequence, read N- to C-terminus: MKHHSLIFLTGFSGSGKSTIGPLLANSLGYGFIDLDQEIESKAGKSITKIFAEEGEQTFRNLELETLRQLTGKKELVVSLGGGVLENNDCYRLIRENGTLVYLKSSPRSLARRLCNKTDRPLLKGEHGTRLSREEIELKISTILEKREPRYATADLSVQTDIKRIGSTVEELTRTIIRFVRQAEQARLKQQSDNNREKQ.

14 to 19 is a binding site for ATP; it reads GSGKST. Ser-18 is a Mg(2+) binding site. Residues Asp-36, Arg-60, and Gly-82 each coordinate substrate. Arg-120 contributes to the ATP binding site. A substrate-binding site is contributed by Arg-147.

It belongs to the shikimate kinase family. As to quaternary structure, monomer. The cofactor is Mg(2+).

The protein localises to the cytoplasm. The enzyme catalyses shikimate + ATP = 3-phosphoshikimate + ADP + H(+). Its pathway is metabolic intermediate biosynthesis; chorismate biosynthesis; chorismate from D-erythrose 4-phosphate and phosphoenolpyruvate: step 5/7. Its function is as follows. Catalyzes the specific phosphorylation of the 3-hydroxyl group of shikimic acid using ATP as a cosubstrate. The chain is Shikimate kinase from Chlorobium limicola (strain DSM 245 / NBRC 103803 / 6330).